The following is a 594-amino-acid chain: ATP-dependent zinc metalloprotease FtsH 1 (594 aa).

Topologically, residues 1–2 (MR) are cytoplasmic. The helical transmembrane segment at 3 to 23 (WWAGAALLLAALLFGRPAAAM) threads the bilayer. The Extracellular segment spans residues 24–92 (EAQPVAYSEF…RVEFVRPADP (69 aa)). Residues 93–113 (IAFRTLLRFIPPLLILGAILW) form a helical membrane-spanning segment. Over 114 to 594 (FTRRTAGGSG…ANSRGDEGNQ (481 aa)) the chain is Cytoplasmic. 186–193 (GPPGTGKT) serves as a coordination point for ATP. Histidine 408 is a Zn(2+) binding site. The active site involves glutamate 409. Histidine 412 and aspartate 485 together coordinate Zn(2+).

The protein in the central section; belongs to the AAA ATPase family. This sequence in the C-terminal section; belongs to the peptidase M41 family. Homohexamer. Zn(2+) serves as cofactor.

It is found in the cell membrane. Acts as a processive, ATP-dependent zinc metallopeptidase for both cytoplasmic and membrane proteins. Plays a role in the quality control of integral membrane proteins. The chain is ATP-dependent zinc metalloprotease FtsH 1 from Symbiobacterium thermophilum (strain DSM 24528 / JCM 14929 / IAM 14863 / T).